A 176-amino-acid chain; its full sequence is Large ribosomal subunit protein uL6 (176 aa).

The protein belongs to the universal ribosomal protein uL6 family. Part of the 50S ribosomal subunit.

This protein binds to the 23S rRNA, and is important in its secondary structure. It is located near the subunit interface in the base of the L7/L12 stalk, and near the tRNA binding site of the peptidyltransferase center. This is Large ribosomal subunit protein uL6 from Burkholderia multivorans (strain ATCC 17616 / 249).